Here is a 429-residue protein sequence, read N- to C-terminus: Enolase (429 aa).

Gln-162 lines the (2R)-2-phosphoglycerate pocket. Glu-204 serves as the catalytic Proton donor. Residues Asp-241, Glu-283, and Asp-310 each contribute to the Mg(2+) site. Positions 335, 364, 365, and 386 each coordinate (2R)-2-phosphoglycerate. Lys-335 acts as the Proton acceptor in catalysis.

Belongs to the enolase family. It depends on Mg(2+) as a cofactor.

It is found in the cytoplasm. Its subcellular location is the secreted. It localises to the cell surface. It catalyses the reaction (2R)-2-phosphoglycerate = phosphoenolpyruvate + H2O. It participates in carbohydrate degradation; glycolysis; pyruvate from D-glyceraldehyde 3-phosphate: step 4/5. Its function is as follows. Catalyzes the reversible conversion of 2-phosphoglycerate (2-PG) into phosphoenolpyruvate (PEP). It is essential for the degradation of carbohydrates via glycolysis. This Mycobacterium tuberculosis (strain ATCC 25177 / H37Ra) protein is Enolase.